Consider the following 464-residue polypeptide: Glutamate--tRNA ligase 1 (464 aa).

Residues proline 8 to glycine 18 carry the 'HIGH' region motif. A 'KMSKS' region motif is present at residues proline 231–arginine 235. Lysine 234 contacts ATP.

Belongs to the class-I aminoacyl-tRNA synthetase family. Glutamate--tRNA ligase type 1 subfamily. In terms of assembly, monomer.

It is found in the cytoplasm. It carries out the reaction tRNA(Glu) + L-glutamate + ATP = L-glutamyl-tRNA(Glu) + AMP + diphosphate. In terms of biological role, catalyzes the attachment of glutamate to tRNA(Glu) in a two-step reaction: glutamate is first activated by ATP to form Glu-AMP and then transferred to the acceptor end of tRNA(Glu). The chain is Glutamate--tRNA ligase 1 from Thermotoga sp. (strain RQ2).